The primary structure comprises 727 residues: Pentatricopeptide repeat-containing protein At2g33680 (727 aa).

PPR repeat units follow at residues His-13–Thr-47, Cys-48–Lys-78, Asp-79–Pro-116, Asn-117–Phe-150, Asp-152–Arg-182, Asn-183–Glu-213, Ser-220–Gly-254, Phe-255–Arg-285, Asn-286–Pro-320, Ser-321–Arg-355, His-356–Arg-386, Asp-387–Pro-421, Asn-422–Leu-456, Glu-457–Lys-487, Asp-488–Pro-522, Asp-523–Gln-553, and Lys-559–Cys-593. A type E motif region spans residues Leu-594–Lys-669. Residues Asn-670–Ile-700 form a type E(+) motif region.

Belongs to the PPR family. PCMP-E subfamily.

In Arabidopsis thaliana (Mouse-ear cress), this protein is Pentatricopeptide repeat-containing protein At2g33680 (PCMP-E19).